Reading from the N-terminus, the 691-residue chain is Dynamin-1-like protein (691 aa).

The region spanning 22-301 (IIQLPQIAVV…LMHHIRDCLP (280 aa)) is the Dynamin-type G domain. The interval 32–39 (GTQSSGKS) is G1 motif. Position 32–40 (32–40 (GTQSSGKSS)) interacts with GTP. Positions 58–60 (VTR) are G2 motif. The segment at 145 to 148 (DLPG) is G3 motif. Positions 214-217 (TKLD) are G4 motif. GTP-binding positions include 214–220 (TKLDLMD) and 245–248 (NRSQ). A G5 motif region spans residues 244 to 247 (VNRS). Positions 343-488 (YCNTIEGTAK…NEMVHNLVAI (146 aa)) are middle domain. 2 stretches are compositionally biased toward basic and acidic residues: residues 522-531 (LPTSVPRDKM) and 551-563 (KKGD…EKTK). The segment at 522–573 (LPTSVPRDKMAGGAQAEQEGGTGTWRGMLKKGDEGQGEEKTKLQSSIPASPQ) is disordered. Positions 599-690 (CEVIERLIKS…VIAEIRETHL (92 aa)) constitute a GED domain. Residues 609–623 (YFLIVRKNIQDSVPK) are important for homodimerization.

The protein belongs to the TRAFAC class dynamin-like GTPase superfamily. Dynamin/Fzo/YdjA family. Homotetramer; dimerizes through the N-terminal GTP-middle region of one molecule binding to the GED domain of another DNM1L molecule. Oligomerizes in a GTP-dependent manner to form membrane-associated tubules with a spiral pattern.

The protein resides in the cytoplasm. It is found in the cytosol. It localises to the golgi apparatus. The protein localises to the endomembrane system. Its subcellular location is the mitochondrion outer membrane. The protein resides in the peroxisome. It is found in the membrane. It localises to the clathrin-coated pit. The protein localises to the cytoplasmic vesicle. Its subcellular location is the secretory vesicle. The protein resides in the synaptic vesicle membrane. The enzyme catalyses GTP + H2O = GDP + phosphate + H(+). In terms of biological role, functions in mitochondrial and peroxisomal division. Mediates membrane fission through oligomerization into membrane-associated tubular structures that wrap around the scission site to constrict and sever the mitochondrial membrane through a GTP hydrolysis-dependent mechanism. The specific recruitment at scission sites is mediated by membrane receptors like MFF, MIEF1 and MIEF2 for mitochondrial membranes. While the recruitment by the membrane receptors is GTP-dependent, the following hydrolysis of GTP induces the dissociation from the receptors and allows DNM1L filaments to curl into closed rings that are probably sufficient to sever a double membrane. May play a role in the circadian control of mitochondrial ATP production. This chain is Dynamin-1-like protein, found in Danio rerio (Zebrafish).